The chain runs to 252 residues: Probable transcriptional regulatory protein Npun_R5651 (252 aa).

The protein belongs to the TACO1 family.

Its subcellular location is the cytoplasm. The protein is Probable transcriptional regulatory protein Npun_R5651 of Nostoc punctiforme (strain ATCC 29133 / PCC 73102).